The chain runs to 705 residues: MSSNTGDQFANLGKALSTTASVLFSSQPMEDTILSYSSPYKKLLHETITNAGGGSSLVKVRHDVKLSKGKNTGFQDIYSNSKEFFKNSYSDPKTTFKVLSYLSDDLLEDAPRDTIPQNKNMITENGEKRSAKSKKQEPTLFQGFEASLPVINETIELQQKLIMNSDMKPLTDSESIPVYAEEEEQEEEFSLPDHLKADKLLHSYSASFLKDASRSITDNLDLLEIQKNLAASEIRELDIKLEKLKMMRELVFKRVAKIEQHELFLEKHLNNVKDRIDMIIEYNMDKEYSSEDEENINGLSELSPKTGETNETYETAATTPLENKEEEHSPLLSKSIYQQLQDHEKKSDISERKKHSTSKKIKDVGVSHRNRRRKTYPTLQQFYDSGSKITSLPKAHDEDITCLDFDMPFGTMCSAGSLDHSVKVWDLSKKKQIATLHGHLASISCMQIDQYSTLITGGRDAVLKLWDIDKAMADEASNSSEDNDACLYTFDSHVDEITAISFDGDNLVSGSQDRTVRQWDLNSGKCTQTIDISFATGPMRSQRNIPLRNSVLLTKEPPAIGALQCFDAALATGTKDGIVRLWDLRSGKVVRMLEGHTDAITSLQFDSVNLVTGAMDRSIRIWDLRTGILSDVFAYEQPITSLHFDLDKIVISNNEPTVKIYNRKDGNHWFCGEDDPEQGNVDFVRYKHGYLVEGRSNGDINTWAI.

A disordered region spans residues 110–136 (APRDTIPQNKNMITENGEKRSAKSKKQ). Positions 125–136 (NGEKRSAKSKKQ) are enriched in basic and acidic residues. The stretch at 216–250 (ITDNLDLLEIQKNLAASEIRELDIKLEKLKMMREL) forms a coiled coil. Disordered regions lie at residues 290–310 (SEDE…GETN) and 342–369 (DHEK…VSHR). Residues 342–351 (DHEKKSDISE) are compositionally biased toward basic and acidic residues. WD repeat units follow at residues 395–435 (AHDE…QIAT), 438–476 (GHLA…ADEA), 492–529 (SHVD…CTQT), 547–594 (LRNS…RMLE), 595–632 (GHTD…LSDV), 634–671 (AYEQ…HWFC), and 676–705 (PEQG…TWAI).

It belongs to the WD repeat MDV1/CAF4 family.

The protein resides in the mitochondrion outer membrane. In terms of biological role, involved in mitochondrial fission. Acts as an adapter protein required to form mitochondrial fission complexes. Formation of these complexes is required to promote constriction and fission of the mitochondrial compartment at a late step in mitochondrial division. The polypeptide is Mitochondrial division protein 1 (MDV1) (Kluyveromyces lactis (strain ATCC 8585 / CBS 2359 / DSM 70799 / NBRC 1267 / NRRL Y-1140 / WM37) (Yeast)).